We begin with the raw amino-acid sequence, 544 residues long: MAKDIKFSEEARRSMLRGVDTLANAVKVTLGPKGRNVVLEKKFGSPLITNDGVTIAKEIELEDAFENMGAKLVAEVASKTNDVAGDGTTTATVLAQAMIREGLKNVTAGANPMGLRKGIEKAVTAAIEELKTISKPIEGKSSIAQVAAISAADEEVGQLIAEAMERVGNDGVITLEESKGFTTELDVVEGMQFDRGYASPYMITDSDKMEAVLDNPYILITDKKISNIQEILPVLEQVVQQGKPLLIIAEDVEGEALATLVVNKLRGTFNVVAVKAPGFGDRRKAMLEDIAILTGGEVITEELGRDLKSATVESLGRAGKVVVTKENTTVVEGVGSTEQIEARIGQIRAQLEETTSEFDREKLQERLAKLAGGVAVIKVGAATETELKERKLRIEDALNSTRAAVEEGIVAGGGTSLMNVYTKVASIVAEGDEATGINIVLRALEEPVRQIAINAGLEGSVVVERLKGEKVGVGFNAATGEWVNMLESGIVDPAKVTRSALQNAASVAAMFLTTEAVVADKPEPNAPAMPDMGGMGMGGMGGMM.

ATP contacts are provided by residues 29–32 (TLGP), 86–90 (DGTTT), Gly-413, 476–478 (NAA), and Asp-492.

The protein belongs to the chaperonin (HSP60) family. As to quaternary structure, forms a cylinder of 14 subunits composed of two heptameric rings stacked back-to-back. Interacts with the co-chaperonin GroES.

It localises to the cytoplasm. It catalyses the reaction ATP + H2O + a folded polypeptide = ADP + phosphate + an unfolded polypeptide.. In terms of biological role, together with its co-chaperonin GroES, plays an essential role in assisting protein folding. The GroEL-GroES system forms a nano-cage that allows encapsulation of the non-native substrate proteins and provides a physical environment optimized to promote and accelerate protein folding. In Bacillus cereus (strain B4264), this protein is Chaperonin GroEL.